A 284-amino-acid chain; its full sequence is Protease HtpX (284 aa).

2 helical membrane-spanning segments follow: residues 4 to 24 (ILLFLATNAAVLIVFNIILSL) and 33 to 53 (MGLLIMAALFGFTGSIISLLM). H139 is a binding site for Zn(2+). E140 is an active-site residue. Position 143 (H143) interacts with Zn(2+). Transmembrane regions (helical) follow at residues 147–167 (GDMVTMTLLQGVLNTFVIFAA) and 187–207 (IYFLVAMVLEVVFGFLASMIA). E215 is a Zn(2+) binding site.

The protein belongs to the peptidase M48B family. Zn(2+) is required as a cofactor.

The protein localises to the cell inner membrane. This is Protease HtpX from Mannheimia succiniciproducens (strain KCTC 0769BP / MBEL55E).